A 404-amino-acid polypeptide reads, in one-letter code: Tryptophan synthase beta chain (404 aa).

Position 94 is an N6-(pyridoxal phosphate)lysine (lysine 94).

This sequence belongs to the TrpB family. Tetramer of two alpha and two beta chains. Requires pyridoxal 5'-phosphate as cofactor.

It carries out the reaction (1S,2R)-1-C-(indol-3-yl)glycerol 3-phosphate + L-serine = D-glyceraldehyde 3-phosphate + L-tryptophan + H2O. Its pathway is amino-acid biosynthesis; L-tryptophan biosynthesis; L-tryptophan from chorismate: step 5/5. Its function is as follows. The beta subunit is responsible for the synthesis of L-tryptophan from indole and L-serine. The protein is Tryptophan synthase beta chain of Staphylococcus aureus (strain USA300).